Consider the following 870-residue polypeptide: Leucine--tRNA ligase (870 aa).

The 'HIGH' region signature appears at 36 to 46; that stretch reads PYPSGKIHLGH. A 'KMSKS' region motif is present at residues 602-606; the sequence is KMSKS. K605 lines the ATP pocket.

It belongs to the class-I aminoacyl-tRNA synthetase family.

Its subcellular location is the cytoplasm. The catalysed reaction is tRNA(Leu) + L-leucine + ATP = L-leucyl-tRNA(Leu) + AMP + diphosphate. In Rickettsia akari (strain Hartford), this protein is Leucine--tRNA ligase.